An 874-amino-acid polypeptide reads, in one-letter code: Alanine--tRNA ligase (874 aa).

Residues His-562, His-566, Cys-665, and His-669 each coordinate Zn(2+).

Belongs to the class-II aminoacyl-tRNA synthetase family. Zn(2+) serves as cofactor.

It is found in the cytoplasm. The enzyme catalyses tRNA(Ala) + L-alanine + ATP = L-alanyl-tRNA(Ala) + AMP + diphosphate. Functionally, catalyzes the attachment of alanine to tRNA(Ala) in a two-step reaction: alanine is first activated by ATP to form Ala-AMP and then transferred to the acceptor end of tRNA(Ala). Also edits incorrectly charged Ser-tRNA(Ala) and Gly-tRNA(Ala) via its editing domain. This Pseudomonas putida (strain ATCC 700007 / DSM 6899 / JCM 31910 / BCRC 17059 / LMG 24140 / F1) protein is Alanine--tRNA ligase.